A 286-amino-acid polypeptide reads, in one-letter code: Putative cyclin-H (286 aa).

The Cyclin N-terminal domain occupies 79 to 148 (AIIYIKRFYL…ILESLNFNLI (70 aa)). The interval 235–286 (NNNNNNNNNNNNNNNNNNNNNNNNNNNNNNNNNNNNNNNNNNNNNNNNNLLL) is disordered.

The protein belongs to the cyclin family. Cyclin C subfamily.

It is found in the nucleus. In terms of biological role, may regulate cdk7 involved in transcription regulation and cell cycle progression. The polypeptide is Putative cyclin-H (cycH) (Dictyostelium discoideum (Social amoeba)).